The chain runs to 254 residues: UPF0246 protein CPE2152 (254 aa).

The protein belongs to the UPF0246 family.

The polypeptide is UPF0246 protein CPE2152 (Clostridium perfringens (strain 13 / Type A)).